The sequence spans 517 residues: UDP-N-acetylmuramyl-tripeptide synthetase (517 aa).

Ser-38 is a UDP-N-acetyl-alpha-D-muramoyl-L-alanyl-D-glutamate binding site. 116 to 122 contributes to the ATP binding site; that stretch reads GTKGKTT. Residues Asn-160, 162 to 163, Ser-189, and Arg-197 each bind UDP-N-acetyl-alpha-D-muramoyl-L-alanyl-D-glutamate; that span reads TT. At Lys-231 the chain carries N6-carboxylysine.

It belongs to the MurCDEF family. MurE subfamily. Carboxylation is probably crucial for Mg(2+) binding and, consequently, for the gamma-phosphate positioning of ATP.

It is found in the cytoplasm. It functions in the pathway cell wall biogenesis; peptidoglycan biosynthesis. Catalyzes the addition of an amino acid to the nucleotide precursor UDP-N-acetylmuramoyl-L-alanyl-D-glutamate (UMAG) in the biosynthesis of bacterial cell-wall peptidoglycan. This Lacticaseibacillus paracasei (strain ATCC 334 / BCRC 17002 / CCUG 31169 / CIP 107868 / KCTC 3260 / NRRL B-441) (Lactobacillus paracasei) protein is UDP-N-acetylmuramyl-tripeptide synthetase.